Consider the following 1321-residue polypeptide: Bile salt export pump (1321 aa).

Residues 1-62 lie on the Cytoplasmic side of the membrane; the sequence is MSDSVILRSI…FSSSTDIWLM (62 aa). Residues 16–37 form a disordered region; sequence ENDGFESDKSYNNDKKSRLQDE. The segment covering 21–37 has biased composition (basic and acidic residues); sequence ESDKSYNNDKKSRLQDE. One can recognise an ABC transmembrane type-1 1 domain in the interval 62–385; the sequence is MFVGSLCAFL…ASPCLEAFAT (324 aa). The chain crosses the membrane as a helical span at residues 63–83; it reads FVGSLCAFLHGIAQPGVLLIF. The Extracellular segment spans residues 84-147; the sequence is GTMTDVFIDY…MIKFASYYAG (64 aa). 4 N-linked (GlcNAc...) asparagine glycosylation sites follow: asparagine 109, asparagine 116, asparagine 122, and asparagine 125. The chain crosses the membrane as a helical span at residues 148 to 168; sequence IAVAVLITGYIQICFWVIAAA. At 169–215 the chain is on the cytoplasmic side; the sequence is RQIQKMRKFYFRRIMRMEIGWFDCNSVGELNTRFSDDINKINDAIAD. Residues 216–236 traverse the membrane as a helical segment; that stretch reads QMALFIQRMTSTICGFLLGFF. Residues 237–240 are Extracellular-facing; the sequence is RGWK. A helical membrane pass occupies residues 241–261; sequence LTLVIISVSPLIGIGAATIGL. The Cytoplasmic portion of the chain corresponds to 262-319; sequence SVSKFTDYELKAYAKAGVVADEVISSMRTVAAFGGEKREVERYEKNLVFAQRWGIRKG. Residues 320-340 traverse the membrane as a helical segment; sequence IVMGFFTGFVWCLIFLCYALA. Residues 341-353 are Extracellular-facing; the sequence is FWYGSTLVLDEGE. A helical membrane pass occupies residues 354-374; the sequence is YTPGTLVQIFLSVIVGALNLG. Topologically, residues 375–755 are cytoplasmic; sequence NASPCLEAFA…KFSAPEWPYM (381 aa). The ABC transporter 1 domain maps to 420–656; the sequence is IEFHNVTFHY…KGVYFTLVTL (237 aa). 455–462 is an ATP binding site; it reads GPSGAGKS. A Phosphothreonine modification is found at threonine 586. Serine 587 carries the post-translational modification Phosphoserine. The segment at 651–672 is interaction with HAX1; that stretch reads FTLVTLQSQGNQALNEEDIKDA. Phosphoserine occurs at positions 690, 701, and 704. Residues 755 to 1043 form the ABC transmembrane type-1 2 domain; that stretch reads MLVGSVGAAV…AFSYTPSYAK (289 aa). The helical transmembrane segment at 756 to 776 threads the bilayer; that stretch reads LVGSVGAAVNGTVTPLYAFLF. At 777 to 794 the chain is on the extracellular side; that stretch reads SQILGTFSIPDKEEQRSQ. The chain crosses the membrane as a helical span at residues 795–815; the sequence is INGVCLLFVAMGCVSLFTQFL. The Cytoplasmic portion of the chain corresponds to 816–869; it reads QGYAFAKSGELLTKRLRKFGFRAMLGQDIAWFDDLRNSPGALTTRLATDASQVQ. 2 helical membrane-spanning segments follow: residues 870–890 and 891–911; these read GAAG…TVAM and IIAF…FPFL. The Cytoplasmic segment spans residues 912–979; sequence ALSGATQTRM…PFKTAIQKAN (68 aa). The chain crosses the membrane as a helical span at residues 980–1000; the sequence is IYGFCFAFAQCIMFIANSASY. Residues 1001-1011 are Extracellular-facing; it reads RYGGYLISNEG. A helical transmembrane segment spans residues 1012 to 1032; that stretch reads LHFSYVFRVISAVVLSATALG. Topologically, residues 1033-1321 are cytoplasmic; sequence RAFSYTPSYA…KLVTTGSPIS (289 aa). One can recognise an ABC transporter 2 domain in the interval 1078–1316; the sequence is IDFVDCKFTY…KGAYYKLVTT (239 aa). Residue 1113 to 1120 participates in ATP binding; that stretch reads GSSGCGKS. Serine 1214 carries the post-translational modification Phosphoserine. The mediates internalization from the plasma membrane stretch occupies residues 1311–1314; sequence YKLV. At serine 1321 the chain carries Phosphoserine.

Belongs to the ABC transporter superfamily. ABCB family. Multidrug resistance exporter (TC 3.A.1.201) subfamily. Interacts with HAX1. Interacts with the adapter protein complex 2 (AP-2) throught AP2A2 or AP2A1; this interaction regulates cell membrane expression of ABCB11 through its internalization in a clathrin-dependent manner and its subsequent degradation. N-glycosylated. Post-translationally, ubiquitinated; short-chain ubiquitination regulates cell-Surface expression of ABCB11. As to expression, expressed predominantly, if not exclusively in the liver, where it was further localized to the canalicular microvilli and to subcanalicular vesicles of the hepatocytes by in situ.

The protein resides in the apical cell membrane. Its subcellular location is the recycling endosome membrane. The protein localises to the endosome. It localises to the cell membrane. The catalysed reaction is cholate(in) + ATP + H2O = cholate(out) + ADP + phosphate + H(+). It carries out the reaction taurocholate(in) + ATP + H2O = taurocholate(out) + ADP + phosphate + H(+). It catalyses the reaction glycocholate(in) + ATP + H2O = glycocholate(out) + ADP + phosphate + H(+). The enzyme catalyses glycochenodeoxycholate(in) + ATP + H2O = glycochenodeoxycholate(out) + ADP + phosphate + H(+). The catalysed reaction is taurochenodeoxycholate(in) + ATP + H2O = taurochenodeoxycholate(out) + ADP + phosphate + H(+). It carries out the reaction glycoursodeoxycholate(in) + ATP + H2O = glycoursodeoxycholate(out) + ADP + phosphate + H(+). It catalyses the reaction tauroursodeoxycholate(in) + ATP + H2O = tauroursodeoxycholate(out) + ADP + phosphate + H(+). The enzyme catalyses taurodeoxycholate(in) + ATP + H2O = taurodeoxycholate(out) + ADP + phosphate + H(+). The catalysed reaction is taurolithocholate 3-sulfate(in) + ATP + H2O = taurolithocholate 3-sulfate(out) + ADP + phosphate + H(+). It carries out the reaction pravastatin(in) + ATP + H2O = pravastatin(out) + ADP + phosphate + H(+). With respect to regulation, the uptake of taurocholate is inhibited by taurolithocholate sulfate with an IC(50) of 9 uM. Pravastatin competitively inhibits the transport of taurocholic acid. Cyclosporin A, glibenclamide, rifampicin and troglitazonestrongly competitively inhibit the transport activity of taurocholate. The canalicular transport activity of taurocholate is strongly dependent on canalicular membrane cholesterol content. The uptake of taurocholate is increased by short- and medium-chain fatty acids. Cholesterol increases transport capacity of taurocholate without affecting the affinity for the substrate. Functionally, catalyzes the transport of the major hydrophobic bile salts, such as taurine and glycine-conjugated cholic acid across the canalicular membrane of hepatocytes in an ATP-dependent manner, therefore participates in hepatic bile acid homeostasis and consequently to lipid homeostasis through regulation of biliary lipid secretion in a bile salts dependent manner. Transports taurine-conjugated bile salts more rapidly than glycine-conjugated bile salts. Also transports non-bile acid compounds, such as pravastatin and fexofenadine in an ATP-dependent manner and may be involved in their biliary excretion. In Homo sapiens (Human), this protein is Bile salt export pump.